A 186-amino-acid chain; its full sequence is Large ribosomal subunit protein uL22 (186 aa).

It belongs to the universal ribosomal protein uL22 family. As to quaternary structure, component of the large ribosomal subunit (LSU). Mature N.crassa ribosomes consist of a small (40S) and a large (60S) subunit. The 40S small subunit contains 1 molecule of ribosomal RNA (18S rRNA) and at least 32 different proteins. The large 60S subunit contains 3 rRNA molecules (26S, 5.8S and 5S rRNA) and at least 42 different proteins.

The protein localises to the cytoplasm. Component of the ribosome, a large ribonucleoprotein complex responsible for the synthesis of proteins in the cell. The small ribosomal subunit (SSU) binds messenger RNAs (mRNAs) and translates the encoded message by selecting cognate aminoacyl-transfer RNA (tRNA) molecules. The large subunit (LSU) contains the ribosomal catalytic site termed the peptidyl transferase center (PTC), which catalyzes the formation of peptide bonds, thereby polymerizing the amino acids delivered by tRNAs into a polypeptide chain. The nascent polypeptides leave the ribosome through a tunnel in the LSU and interact with protein factors that function in enzymatic processing, targeting, and the membrane insertion of nascent chains at the exit of the ribosomal tunnel. The polypeptide is Large ribosomal subunit protein uL22 (rpl-17) (Neurospora crassa (strain ATCC 24698 / 74-OR23-1A / CBS 708.71 / DSM 1257 / FGSC 987)).